Here is a 361-residue protein sequence, read N- to C-terminus: G-protein coupled receptor 52 (361 aa).

Residues 1 to 44 (MNDSRWTEWRILNTSSGILNVSERHSCPLGFGHYSAVDVCIFET) are Extracellular-facing. Residues N2, N13, and N20 are each glycosylated (N-linked (GlcNAc...) asparagine). A helical membrane pass occupies residues 45–65 (IVIVLLTFLIIAGNLTVIFVF). Residues 66-87 (HCAPLLHHYTTSYFIQTMAYAD) lie on the Cytoplasmic side of the membrane. The helical transmembrane segment at 88 to 108 (LFVGVSCLVPTLSLLHYSTGI) threads the bilayer. The Extracellular portion of the chain corresponds to 109–115 (HESLTCQ). Residues C114 and C193 are joined by a disulfide bond. The chain crosses the membrane as a helical span at residues 116 to 136 (VFGYIISVLKSVSMACLACIS). At 137-159 (VDRYLAITKPLSYNQLVTPCRLR) the chain is on the cytoplasmic side. Residues 160 to 180 (ICIILIWIYSCLIFLPSFFGW) form a helical membrane-spanning segment. Residues 181 to 200 (GKPGYHGDIFEWCATSWLTS) lie on the Extracellular side of the membrane. Residues 201-221 (AYFTGFIVCLLYAPAALVVCF) form a helical membrane-spanning segment. At 222–265 (TYFHIFKICRQHTKEINDRRARFPSHEAAASRDAGHSPDRRYAM) the chain is on the cytoplasmic side. The chain crosses the membrane as a helical span at residues 266 to 286 (VLFRITSVFYMLWLPYIIYFL). At 287–296 (LESSRVLDNP) the chain is on the extracellular side. The chain crosses the membrane as a helical span at residues 297-317 (TLSFLTTWLAISNSFCNCVIY). The Cytoplasmic segment spans residues 318 to 361 (SLSNSVFRLGLRRLSETMCTSCMCVKDKEARDPKPRKRANSCSI).

This sequence belongs to the G-protein coupled receptor 1 family.

Its subcellular location is the cell membrane. Functionally, G- protein coupled receptor activated by antipsychotics reserpine leading to an increase in intracellular cAMP and its internalization. May play a role in locomotor activity through modulation of dopamine, NMDA and ADORA2A-induced locomotor activity. These behavioral changes are accompanied by modulation of the dopamine receptor signaling pathway in striatum. Modulates HTT level via cAMP-dependent but PKA independent mechanisms throught activation of RAB39B that translocates HTT to the endoplasmic reticulum, thus avoiding proteasome degradation. This Bos taurus (Bovine) protein is G-protein coupled receptor 52.